A 376-amino-acid polypeptide reads, in one-letter code: Ribosomal RNA large subunit methyltransferase G (376 aa).

This sequence belongs to the methyltransferase superfamily. RlmG family.

It localises to the cytoplasm. The catalysed reaction is guanosine(1835) in 23S rRNA + S-adenosyl-L-methionine = N(2)-methylguanosine(1835) in 23S rRNA + S-adenosyl-L-homocysteine + H(+). In terms of biological role, specifically methylates the guanine in position 1835 (m2G1835) of 23S rRNA. The chain is Ribosomal RNA large subunit methyltransferase G from Cronobacter sakazakii (strain ATCC BAA-894) (Enterobacter sakazakii).